The chain runs to 444 residues: Enolase 2 (444 aa).

2 residues coordinate substrate: histidine 165 and glutamate 174. The Proton donor role is filled by glutamate 217. Mg(2+) is bound by residues aspartate 252, glutamate 303, and aspartate 330. Glutamate 303 and aspartate 330 together coordinate substrate. Residue lysine 355 is the Proton acceptor of the active site. Substrate contacts are provided by residues 382-385 (SHRS) and lysine 406.

The protein belongs to the enolase family. In terms of assembly, homodimer. It depends on Mg(2+) as a cofactor.

It localises to the cytoplasm. It catalyses the reaction (2R)-2-phosphoglycerate = phosphoenolpyruvate + H2O. Its pathway is carbohydrate degradation; glycolysis; pyruvate from D-glyceraldehyde 3-phosphate: step 4/5. The protein is Enolase 2 (ENO2) of Toxoplasma gondii.